Consider the following 263-residue polypeptide: Small ribosomal subunit protein uS3 (263 aa).

Residues 39–107 (VREYLKKKLK…PVHVNIEEIR (69 aa)) enclose the KH type-2 domain. Positions 211 to 263 (GELPPEAATPREEERRPRRAPRGDRPDGGRPGRPGGRGRGPRKADAAPAPEGE) are disordered. The span at 219-240 (TPREEERRPRRAPRGDRPDGGR) shows a compositional bias: basic and acidic residues.

The protein belongs to the universal ribosomal protein uS3 family. As to quaternary structure, part of the 30S ribosomal subunit. Forms a tight complex with proteins S10 and S14.

Binds the lower part of the 30S subunit head. Binds mRNA in the 70S ribosome, positioning it for translation. The chain is Small ribosomal subunit protein uS3 from Bordetella petrii (strain ATCC BAA-461 / DSM 12804 / CCUG 43448).